The chain runs to 259 residues: Adenosylcobinamide-GDP ribazoletransferase (259 aa).

Transmembrane regions (helical) follow at residues 27-47 (ITFL…ILYI), 51-71 (FSHL…NGLN), 100-120 (VGAG…LSLA), 124-144 (LYIG…SMMI), 175-195 (FLAI…VIVA), and 219-239 (VIGF…IIIA).

Belongs to the CobS family. It depends on Mg(2+) as a cofactor.

Its subcellular location is the cell membrane. It carries out the reaction alpha-ribazole + adenosylcob(III)inamide-GDP = adenosylcob(III)alamin + GMP + H(+). It catalyses the reaction alpha-ribazole 5'-phosphate + adenosylcob(III)inamide-GDP = adenosylcob(III)alamin 5'-phosphate + GMP + H(+). The protein operates within cofactor biosynthesis; adenosylcobalamin biosynthesis; adenosylcobalamin from cob(II)yrinate a,c-diamide: step 7/7. Its function is as follows. Joins adenosylcobinamide-GDP and alpha-ribazole to generate adenosylcobalamin (Ado-cobalamin). Also synthesizes adenosylcobalamin 5'-phosphate from adenosylcobinamide-GDP and alpha-ribazole 5'-phosphate. In Thermoplasma volcanium (strain ATCC 51530 / DSM 4299 / JCM 9571 / NBRC 15438 / GSS1), this protein is Adenosylcobinamide-GDP ribazoletransferase.